The following is a 197-amino-acid chain: Peptidyl-tRNA hydrolase (197 aa).

Y18 contacts tRNA. Residue H23 is the Proton acceptor of the active site. Residues Y68, N70, and N116 each coordinate tRNA.

This sequence belongs to the PTH family. In terms of assembly, monomer.

The protein resides in the cytoplasm. It carries out the reaction an N-acyl-L-alpha-aminoacyl-tRNA + H2O = an N-acyl-L-amino acid + a tRNA + H(+). Its function is as follows. Hydrolyzes ribosome-free peptidyl-tRNAs (with 1 or more amino acids incorporated), which drop off the ribosome during protein synthesis, or as a result of ribosome stalling. Functionally, catalyzes the release of premature peptidyl moieties from peptidyl-tRNA molecules trapped in stalled 50S ribosomal subunits, and thus maintains levels of free tRNAs and 50S ribosomes. This chain is Peptidyl-tRNA hydrolase, found in Desulfotalea psychrophila (strain LSv54 / DSM 12343).